Consider the following 94-residue polypeptide: Integration host factor subunit beta (94 aa).

The protein belongs to the bacterial histone-like protein family. Heterodimer of an alpha and a beta chain.

In terms of biological role, this protein is one of the two subunits of integration host factor, a specific DNA-binding protein that functions in genetic recombination as well as in transcriptional and translational control. In Salmonella arizonae (strain ATCC BAA-731 / CDC346-86 / RSK2980), this protein is Integration host factor subunit beta.